A 193-amino-acid chain; its full sequence is Small ribosomal subunit protein eS1 (193 aa).

This sequence belongs to the eukaryotic ribosomal protein eS1 family.

This Sulfurisphaera tokodaii (strain DSM 16993 / JCM 10545 / NBRC 100140 / 7) (Sulfolobus tokodaii) protein is Small ribosomal subunit protein eS1.